Reading from the N-terminus, the 165-residue chain is Neurotrophin-3 (165 aa).

The N-terminal stretch at Ile1–Ser3 is a signal peptide. Residues Thr4–Arg119 constitute a propeptide that is removed on maturation. N-linked (GlcNAc...) asparagine glycosylation is present at Asn112.

This sequence belongs to the NGF-beta family.

Its subcellular location is the secreted. Its function is as follows. Seems to promote the survival of visceral and proprioceptive sensory neurons. In Aspidites melanocephalus (Black-headed python), this protein is Neurotrophin-3 (NTF3).